Consider the following 60-residue polypeptide: Phospholipase A2 (60 aa).

Ca(2+) is bound by residues Y27, G29, and G31. C28 and C44 form a disulfide bridge. Residue H47 is part of the active site. Residue D48 coordinates Ca(2+).

It depends on Ca(2+) as a cofactor. In terms of tissue distribution, expressed by the venom gland.

Its subcellular location is the secreted. It carries out the reaction a 1,2-diacyl-sn-glycero-3-phosphocholine + H2O = a 1-acyl-sn-glycero-3-phosphocholine + a fatty acid + H(+). Functionally, snake venom phospholipase A2 (PLA2) that displays mild but significant inhibition of mouse platelet aggregation induced by ADP and collagen. In vivo, induces edema in the foot pads and gastrocnemius muscles of mice but shows no myonecrotic or myotoxic activity. PA2 catalyzes the calcium-dependent hydrolysis of the 2-acyl groups in 3-sn-phosphoglycerides. This chain is Phospholipase A2, found in Lachesis muta rhombeata (Bushmaster).